We begin with the raw amino-acid sequence, 179 residues long: Ribosome maturation factor RimP (179 aa).

Belongs to the RimP family.

Its subcellular location is the cytoplasm. In terms of biological role, required for maturation of 30S ribosomal subunits. The protein is Ribosome maturation factor RimP of Chlorobium chlorochromatii (strain CaD3).